Reading from the N-terminus, the 453-residue chain is Putative ABC transporter ATP-binding protein MM_0462 (453 aa).

The ABC transporter domain occupies 4 to 239 (LETRSLKYSY…QELLKKVGLR (236 aa)). 37–44 (GQNGSGKS) is an ATP binding site.

The protein belongs to the ABC transporter superfamily.

It localises to the cell membrane. In terms of biological role, probably part of an ABC transporter complex. Responsible for energy coupling to the transport system. This Methanosarcina mazei (strain ATCC BAA-159 / DSM 3647 / Goe1 / Go1 / JCM 11833 / OCM 88) (Methanosarcina frisia) protein is Putative ABC transporter ATP-binding protein MM_0462.